The primary structure comprises 586 residues: Protein translocase subunit SecD (586 aa).

6 helical membrane-spanning segments follow: residues 7 to 27 (LILI…TLKW), 418 to 438 (SALA…LSGV), 439 to 459 (VAGF…LSAF), 465 to 485 (LTSI…NIVI), 521 to 541 (TFIA…GFAW), and 546 to 566 (GIVA…EFII).

The protein belongs to the SecD/SecF family. SecD subfamily. Forms a complex with SecF. Part of the essential Sec protein translocation apparatus which comprises SecA, SecYEG and auxiliary proteins SecDF. Other proteins may also be involved.

The protein resides in the cell inner membrane. Part of the Sec protein translocase complex. Interacts with the SecYEG preprotein conducting channel. SecDF uses the proton motive force (PMF) to complete protein translocation after the ATP-dependent function of SecA. The chain is Protein translocase subunit SecD from Borreliella burgdorferi (strain ATCC 35210 / DSM 4680 / CIP 102532 / B31) (Borrelia burgdorferi).